Reading from the N-terminus, the 131-residue chain is D-ribose pyranase (131 aa).

His20 serves as the catalytic Proton donor. Residues Asp28, His98, and Tyr120–Asn122 contribute to the substrate site.

The protein belongs to the RbsD / FucU family. RbsD subfamily. In terms of assembly, homodecamer.

The protein localises to the cytoplasm. It catalyses the reaction beta-D-ribopyranose = beta-D-ribofuranose. The protein operates within carbohydrate metabolism; D-ribose degradation; D-ribose 5-phosphate from beta-D-ribopyranose: step 1/2. Functionally, catalyzes the interconversion of beta-pyran and beta-furan forms of D-ribose. In Lactobacillus gasseri (strain ATCC 33323 / DSM 20243 / BCRC 14619 / CIP 102991 / JCM 1131 / KCTC 3163 / NCIMB 11718 / NCTC 13722 / AM63), this protein is D-ribose pyranase.